The sequence spans 91 residues: Sec-independent protein translocase protein TatA (91 aa).

Residues 1–21 (MGIFDWKHWIVILIVVVLVFG) traverse the membrane as a helical segment. Positions 42-91 (AMNDDDKPAEQPAPQPQQAQAAPQGSPLNQPHTIDAQAHKVDEPIRKDQV) are disordered. Over residues 51–65 (EQPAPQPQQAQAAPQ) the composition is skewed to low complexity. The segment covering 78–91 (QAHKVDEPIRKDQV) has biased composition (basic and acidic residues).

It belongs to the TatA/E family. The Tat system comprises two distinct complexes: a TatABC complex, containing multiple copies of TatA, TatB and TatC subunits, and a separate TatA complex, containing only TatA subunits. Substrates initially bind to the TatABC complex, which probably triggers association of the separate TatA complex to form the active translocon.

The protein localises to the cell inner membrane. Its function is as follows. Part of the twin-arginine translocation (Tat) system that transports large folded proteins containing a characteristic twin-arginine motif in their signal peptide across membranes. TatA could form the protein-conducting channel of the Tat system. The protein is Sec-independent protein translocase protein TatA of Pseudomonas savastanoi pv. phaseolicola (strain 1448A / Race 6) (Pseudomonas syringae pv. phaseolicola (strain 1448A / Race 6)).